Consider the following 459-residue polypeptide: Transcriptional coactivator YAP1-A (459 aa).

The span at methionine 1–alanine 13 shows a compositional bias: low complexity. Residues methionine 1–glutamine 22 are disordered. A phosphoserine; by LATS1 and LATS2 mark is found at serine 30, serine 80, serine 98, and serine 134. 2 disordered regions span residues phenylalanine 65 to serine 99 and serine 126 to proline 145. WW domains are found at residues valine 141–lysine 174 and glycine 199–leucine 232. The disordered stretch occupies residues asparagine 246–glycine 268. Over residues lysine 250–proline 260 the composition is skewed to pro residues. The tract at residues glutamine 261–leucine 459 is transactivation domain. Residues glycine 269–arginine 297 are a coiled coil. The segment at glycine 344–serine 363 is disordered. The span at glutamate 354–serine 363 shows a compositional bias: polar residues.

This sequence belongs to the YAP1 family. In terms of assembly, interacts with tead1. Post-translationally, phosphorylated by lats1 and lats2; leading to cytoplasmic translocation and inactivation.

The protein localises to the cytoplasm. The protein resides in the nucleus. Its subcellular location is the cell junction. It is found in the tight junction. It localises to the cell membrane. Functionally, transcriptional regulator which can act both as a coactivator and a corepressor and is the critical downstream regulatory target in the Hippo signaling pathway that plays a pivotal role in organ size control and tumor suppression by restricting proliferation and promoting apoptosis. Plays a key role in tissue tension and 3D tissue shape by regulating cortical actomyosin network formation. Required for expansion of the neural plate and neural plate border zone progenitor pools. Acts as a direct regulator of pax3 expression via interaction with tead1. The chain is Transcriptional coactivator YAP1-A from Xenopus laevis (African clawed frog).